The following is a 108-amino-acid chain: Envelope small membrane protein (108 aa).

Topologically, residues 1–10 (MNLLNKSLEE) are virion surface. A helical membrane pass occupies residues 11–31 (NGSFLTALYIIVGFLALYLLG). Topologically, residues 32–108 (RALQAFVQAA…QDAQRDKLYS (77 aa)) are intravirion. Residues 88–108 (NGWNNKNPANFQDAQRDKLYS) are disordered. Residues 89 to 100 (GWNNKNPANFQD) show a composition bias toward polar residues.

Belongs to the gammacoronaviruses E protein family. In terms of assembly, homooligomer. Interacts with the M membrane protein in the budding compartment of the host cell, which is located between endoplasmic reticulum and the Golgi complex. The cytoplasmic tails of both proteins are important for this function. Interacts with Nucleoprotein.

The protein localises to the host Golgi apparatus membrane. In terms of biological role, plays a central role in virus morphogenesis and assembly. Acts as a viroporin and self-assembles in host membranes forming pentameric protein-lipid pores that allow ion transport. Also plays a role in the induction of apoptosis. The protein is Envelope small membrane protein of Gallus gallus (Chicken).